A 119-amino-acid polypeptide reads, in one-letter code: Protein TusC (119 aa).

This sequence belongs to the DsrF/TusC family. As to quaternary structure, heterohexamer, formed by a dimer of trimers. The hexameric TusBCD complex contains 2 copies each of TusB, TusC and TusD. The TusBCD complex interacts with TusE.

Its subcellular location is the cytoplasm. Its function is as follows. Part of a sulfur-relay system required for 2-thiolation of 5-methylaminomethyl-2-thiouridine (mnm(5)s(2)U) at tRNA wobble positions. This chain is Protein TusC, found in Escherichia coli O127:H6 (strain E2348/69 / EPEC).